A 383-amino-acid polypeptide reads, in one-letter code: MGCAGSTLRSGASFEDSRLAAIEDSRFHEVGHHAQFEDSRLAAIEDSRFHEVGHHAQFDEGGRFKQLPPANDDAKLLVADHPSLGVIRLDYDYPPALGDVDHPGSFYYDVFYRVVPGLTFELCQSGELPDDVKQRFIDAITWLDEQGVAGITGDCGFFMYFQALARSVTSKPVFMSSLCQLPAVVCAYAADEQIALFTANGESLKPMREIIKKECGVDPDDTRFVIVGCEDVPGFEAVANGDRVDVDSVVPHLVRLAEDTVAKHAGTAKPIRAILFECTELPPYSDAVRAATRLPVFDSITCCNSMLASLMDNPRFGVNNWHLSWDGAHTAHRFGDNVPPHLKGKLVNREHPENIARWNASLAERSSFSSAQQESIGRGSRKL.

Belongs to the aspartate/glutamate racemases family. ALMA1 subfamily. Homotetramer.

It carries out the reaction S,S-dimethyl-beta-propiothetin = acrylate + dimethyl sulfide + H(+). Its function is as follows. Mediates cleavage of dimethylsulfoniopropionate (DMSP) into dimethyl sulfide (DMS) and acrylate. DMS is the principal form by which sulfur is transported from oceans to the atmosphere and is a key component of the ocean sulfur cycle. This chain is Dimethylsulfoniopropionate lyase 3, found in Emiliania huxleyi (strain CCMP1516).